Here is a 621-residue protein sequence, read N- to C-terminus: MSGVNTTAASQDACYISLLGLAEYFRTSQPPNIKKCIQCLQALFTFQPPSKVEARTHLQMGQVLMAYTRNIDLARQHLEQAWSISEPLMNFDDVKFDTASLLAQLHLQTEQSSHAKAMLRRAVELSQNNVYWHCKLLLQLSQIHANDREYSLASDLLAVGAESAEEAGATYLKVLFLLSRAMILMIERKTNDVLALLNSAGQIIDNNIPNPHQKEYLKVFFLVLQVCYYLALGQVKTVKPSLKQLQMSIQTIMAPNWPSDEVIFGANQLEMFVWLPKEQLYVLVYLVTVSHSMMAGYMDKAQKYTEKALTQIEKLKLQEDKSILSVFKVILLEHIVMCRMVMGNRELAIREIAAARDVCIAAPHRNLLKRHSAQLHCLIGLYSMSTSFFEHAERQFLVCVNETGERDLKLFANLNLAIIYLRTKREADLKQILDAVSTENTHTYSSQALMGGFYYVQGLHAFHKNSFHEAKRFLRETLKMANAEDLNRLTSCSLVLLSHVFLSIGNSKESMNMVTPAMQLASKIPDIHVQLWGSAILKDLHRMSKDAQHEKEAYANHVKYSENLIADQRKCVQSAHHELVNWFQGDPPVTSGASLNLPVAVATTEASTSAIQQPAQFGQFY.

TPR repeat units follow at residues 96–129 (FDTA…SQNN), 451–484 (GGFY…ANAE), and 491–524 (SCSL…ASKI).

The protein belongs to the SCC4/mau-2 family. Interacts with Nipped-B to form the cohesin loading complex.

It is found in the nucleus. Its subcellular location is the nucleoplasm. Functionally, required for association of the cohesin complex with chromatin during interphase. Plays a role in sister chromatid cohesion and normal progression through prometaphase. This is MAU2 chromatid cohesion factor homolog from Drosophila virilis (Fruit fly).